The following is a 430-amino-acid chain: Tyrosine--tRNA ligase (430 aa).

Position 32 (Y32) interacts with L-tyrosine. The 'HIGH' region signature appears at 37 to 46 (PTADSLHIGH). Residues Y172 and Q176 each coordinate L-tyrosine. The short motif at 232 to 236 (KFGKT) is the 'KMSKS' region element. K235 contacts ATP. The 69-residue stretch at 362–430 (ISLVDLLADA…KKSYYLIIVE (69 aa)) folds into the S4 RNA-binding domain.

Belongs to the class-I aminoacyl-tRNA synthetase family. TyrS type 1 subfamily. As to quaternary structure, homodimer.

It is found in the cytoplasm. It catalyses the reaction tRNA(Tyr) + L-tyrosine + ATP = L-tyrosyl-tRNA(Tyr) + AMP + diphosphate + H(+). Catalyzes the attachment of tyrosine to tRNA(Tyr) in a two-step reaction: tyrosine is first activated by ATP to form Tyr-AMP and then transferred to the acceptor end of tRNA(Tyr). This chain is Tyrosine--tRNA ligase, found in Porphyromonas gingivalis (strain ATCC BAA-308 / W83).